A 100-amino-acid polypeptide reads, in one-letter code: Signal recognition particle 19 kDa protein (100 aa).

This sequence belongs to the SRP19 family. As to quaternary structure, part of the signal recognition particle protein translocation system, which is composed of SRP and FtsY. Archaeal SRP consists of a 7S RNA molecule of 300 nucleotides and two protein subunits: SRP54 and SRP19.

It localises to the cytoplasm. Involved in targeting and insertion of nascent membrane proteins into the cytoplasmic membrane. Binds directly to 7S RNA and mediates binding of the 54 kDa subunit of the SRP. This is Signal recognition particle 19 kDa protein from Pyrococcus furiosus (strain ATCC 43587 / DSM 3638 / JCM 8422 / Vc1).